The chain runs to 150 residues: Large ribosomal subunit protein uL15 (150 aa).

Residues 1 to 57 (MRLEDIRPQAGSTRRRRRLGRGVSAGQGASCGKGMRGQKARKGGSTRPGFEGGQTPL) are disordered. Residues 23–35 (VSAGQGASCGKGM) are compositionally biased toward gly residues.

It belongs to the universal ribosomal protein uL15 family. In terms of assembly, part of the 50S ribosomal subunit.

Binds to the 23S rRNA. The polypeptide is Large ribosomal subunit protein uL15 (Synechococcus sp. (strain JA-2-3B'a(2-13)) (Cyanobacteria bacterium Yellowstone B-Prime)).